A 477-amino-acid chain; its full sequence is uncharacterized protein (477 aa).

The signal sequence occupies residues 1–18 (MWTALVLVWISSVPLSRS). Residues 19–427 (HTVPAVPRHL…DPLTPSLVNK (409 aa)) lie on the Extracellular side of the membrane. N-linked (GlcNAc...) asparagine glycosylation is found at N40, N51, and N77. Disordered stretches follow at residues 79–103 (TRVT…GTAD), 239–366 (GTIN…TGGP), and 378–398 (KATA…DVKV). Positions 85 to 97 (TTPHGTNTSTPTT) are enriched in low complexity. Composition is skewed to polar residues over residues 253-288 (PAKS…QPVH) and 298-309 (PSNTTLEPNTPK). N300 is a glycosylation site (N-linked (GlcNAc...) asparagine). Composition is skewed to low complexity over residues 310-326 (SVAS…QVQT), 348-361 (TSPT…LPTQ), and 378-393 (KATA…SRSS). A helical transmembrane segment spans residues 428-448 (MFLLVVLIVGVTLFIAVLMMF). Topologically, residues 449-477 (ALQAYESYKKKDYTQVDYLINGMYADSEM) are cytoplasmic.

It localises to the cell membrane. Its subcellular location is the golgi apparatus. The protein resides in the trans-Golgi network membrane. This is an uncharacterized protein from Rattus norvegicus (Rat).